The primary structure comprises 247 residues: MSHRDTLFSAPIASLGDWTFDERVAEVFPDMIQRSVPGYSNIISMIGMLAERFVQPNTQVYDLGCSLGAATLSVRRNIHHANCKIIAVDNSPAMIERCRRHIDAYKAPTPVEIVEGDIRDISIENASMVVLNFTLQFLEPLERQALLDKIYQGLNPGGALVLSEKFSFKDTTVGELLFNMHHDFKRANGYSELEISQKRSMLENVMLTDSVETHKARLHQAGFEHSELWFQCFNFGSLVALKSGVPA.

Residues Tyr39, 64–66 (GCS), 89–90 (DN), 117–118 (DI), Asn132, and Arg199 contribute to the S-adenosyl-L-methionine site.

Belongs to the class I-like SAM-binding methyltransferase superfamily. Cx-SAM synthase family. Homodimer.

It catalyses the reaction prephenate + S-adenosyl-L-methionine = carboxy-S-adenosyl-L-methionine + 3-phenylpyruvate + H2O. Catalyzes the conversion of S-adenosyl-L-methionine (SAM) to carboxy-S-adenosyl-L-methionine (Cx-SAM). The chain is Carboxy-S-adenosyl-L-methionine synthase from Citrobacter koseri (strain ATCC BAA-895 / CDC 4225-83 / SGSC4696).